The following is a 121-amino-acid chain: Large ribosomal subunit protein bL12 (121 aa).

This sequence belongs to the bacterial ribosomal protein bL12 family. Homodimer. Part of the ribosomal stalk of the 50S ribosomal subunit. Forms a multimeric L10(L12)X complex, where L10 forms an elongated spine to which 2 to 4 L12 dimers bind in a sequential fashion. Binds GTP-bound translation factors.

Its function is as follows. Forms part of the ribosomal stalk which helps the ribosome interact with GTP-bound translation factors. Is thus essential for accurate translation. This chain is Large ribosomal subunit protein bL12, found in Limosilactobacillus reuteri (strain DSM 20016) (Lactobacillus reuteri).